Reading from the N-terminus, the 284-residue chain is 2-dehydro-3-deoxyphosphooctonate aldolase (284 aa).

This sequence belongs to the KdsA family.

It localises to the cytoplasm. The enzyme catalyses D-arabinose 5-phosphate + phosphoenolpyruvate + H2O = 3-deoxy-alpha-D-manno-2-octulosonate-8-phosphate + phosphate. The protein operates within carbohydrate biosynthesis; 3-deoxy-D-manno-octulosonate biosynthesis; 3-deoxy-D-manno-octulosonate from D-ribulose 5-phosphate: step 2/3. It functions in the pathway bacterial outer membrane biogenesis; lipopolysaccharide biosynthesis. This chain is 2-dehydro-3-deoxyphosphooctonate aldolase, found in Burkholderia vietnamiensis (strain G4 / LMG 22486) (Burkholderia cepacia (strain R1808)).